Reading from the N-terminus, the 246-residue chain is Mast cell protease-like protein (246 aa).

Residues 1-18 form the signal peptide; it reads MQALLFLMALLLPSGAGA. Positions 19-20 are cleaved as a propeptide — activation peptide; it reads EE. One can recognise a Peptidase S1 domain in the interval 21-244; that stretch reads IIGGVESEPH…HVPWINRVIK (224 aa). Cysteine 50 and cysteine 66 are disulfide-bonded. Catalysis depends on charge relay system residues histidine 65 and aspartate 109. Cystine bridges form between cysteine 143-cysteine 208 and cysteine 174-cysteine 187. Serine 202 serves as the catalytic Charge relay system.

The protein belongs to the peptidase S1 family. Granzyme subfamily.

The sequence is that of Mast cell protease-like protein (Mcptl) from Mus musculus (Mouse).